The primary structure comprises 503 residues: Na(+)-translocating NADH-quinone reductase subunit B (503 aa).

5 helical membrane-spanning segments follow: residues 55 to 75, 94 to 114, 120 to 140, 161 to 181, and 186 to 206; these read MMLV…NSGL, ISGF…VPIL, IFIP…VLFA, TLPP…GIVV, and FGGT…FLFF. Position 248 is an FMN phosphoryl threonine (T248). A run of 5 helical transmembrane segments spans residues 361 to 381, 386 to 406, 417 to 437, 452 to 472, and 475 to 495; these read TSTF…IASW, AFGI…VLIV, FFIP…LVFM, WIYG…NPAY, and GVML…YFAV.

It belongs to the NqrB/RnfD family. Composed of six subunits; NqrA, NqrB, NqrC, NqrD, NqrE and NqrF. The cofactor is FMN.

It localises to the cell inner membrane. The enzyme catalyses a ubiquinone + n Na(+)(in) + NADH + H(+) = a ubiquinol + n Na(+)(out) + NAD(+). NQR complex catalyzes the reduction of ubiquinone-1 to ubiquinol by two successive reactions, coupled with the transport of Na(+) ions from the cytoplasm to the periplasm. NqrA to NqrE are probably involved in the second step, the conversion of ubisemiquinone to ubiquinol. In Chlamydia pneumoniae (Chlamydophila pneumoniae), this protein is Na(+)-translocating NADH-quinone reductase subunit B.